Consider the following 20-residue polypeptide: Phospholipase A2 D5 (20 aa).

Requires Ca(2+) as cofactor. Post-translationally, contains seven disulfide bonds. In terms of tissue distribution, expressed by the venom gland.

It localises to the secreted. The enzyme catalyses a 1,2-diacyl-sn-glycero-3-phosphocholine + H2O = a 1-acyl-sn-glycero-3-phosphocholine + a fatty acid + H(+). Its function is as follows. PLA2 catalyzes the calcium-dependent hydrolysis of the 2-acyl groups in 3-sn-phosphoglycerides. The protein is Phospholipase A2 D5 of Micrurus pyrrhocryptus (Coral snake).